The primary structure comprises 253 residues: Tabinhibitin 3 (253 aa).

The signal sequence occupies residues 1 to 22 (MTLKRIFCAALALIVLQSVASA). The SCP domain maps to 66 to 209 (LQKTNWLRGV…LKRALFTCNF (144 aa)). The Cell attachment site signature appears at 222-224 (RGD).

Belongs to the CRISP family. As to expression, expressed in salivary glands.

It is found in the secreted. In terms of biological role, inhibits platelet aggregation induced by all agonists tested (ADP, arachidonic acid, the thromboxane A2 analog U46619, thrombin, and snake venom snaclecs (TMVA that activates platelet through GPIB, and stejnulxin that specifically acts through GPVI (GP6))). May act by competing with fibrinogen for binding to glycoprotein IIb/IIIa (ITGA2B/ITGB3). The chain is Tabinhibitin 3 from Tabanus yao (Horsefly).